The chain runs to 469 residues: Probable Xaa-Pro aminopeptidase PEPP (469 aa).

D265, D276, E399, and E439 together coordinate Mn(2+).

This sequence belongs to the peptidase M24B family. Mn(2+) serves as cofactor.

It catalyses the reaction Release of any N-terminal amino acid, including proline, that is linked to proline, even from a dipeptide or tripeptide.. In terms of biological role, catalyzes the removal of a penultimate prolyl residue from the N-termini of peptides. The sequence is that of Probable Xaa-Pro aminopeptidase PEPP (PEPP) from Coccidioides posadasii (strain RMSCC 757 / Silveira) (Valley fever fungus).